A 532-amino-acid chain; its full sequence is MKPCKREIVDFDGIRTHFFPNLALYTCYNEELIAHHSENANRFTSYVFGAVEDSPTEQEILEILFPENANPEAISTGMDACLALGENFLSHYKSFNARLNRQNHSHDLLDAVQEFDEKKILAISRKSRLRKSADSKILTILVNILLSENQEEKFMEICELCSLDLDFDAFVLIKILQLENEENAEEVQIIRENVVDQILEQKPFLAHLLKNGPEKIDEITKLLSVPIIGSSSNQINQLITKICDSSEISDTAVEEHYHQNFKLMNILVRTMIVDRFDLTIDALEQIPVEIKNRMFPGIRIRVLQDTLHFLHQLFKVFLNESQKFDNLAPQSFAKAIKNVWVRHAIIGILDSLKFSLNKDVFNQLVPLIPGSQVSNDVISGKVENAISCAIWIVKTFGTEGSRDSIEKLPWFDSSVELTELINSIEIAVTSVEVEDQTVNFRKIPQKDWLDGNLQKALKTEPTSEKFGISNSLKIKDENQRNQIRGFKDNSKEPNAKVSARFGSKFQRVDSSTKRRLFGGVGVGEPRNCRGFL.

As to quaternary structure, interacts with pgl-1 and pgl-3; association with either pgl-1 or pgl-3 is not required for P-granule localization. As to expression, highly expressed in the germline.

It is found in the cytoplasmic granule. Functionally, transient component of P-granule which is involved in germline development. The chain is P granule abnormality protein 2 from Caenorhabditis elegans.